The following is a 2209-amino-acid chain: MGAQVSSQKVGAHENSNRAYGGSTINYTTINYYRDSASNAASKQDFSQDPSKFTEPIKDVLIKTSPMLNSPNIEACGYSDRVLQLTLGNSTITTQEAANSVVAYGRWPEYLRDSEANPVDQPTEPDVAACRFYTLDTVSWTKESRGWWWKLPDALRDMGLFGQNMYYHYLGRSGYTVHVQCNASKFHQGALGVFAVPEMCLAGDSNTTTMHTSYQNANPGEKGGTFTGTFTPDDNQTSPARRFCPVDYLFGNGTLLGNAFVFPHQIINLRTNNCATLVLPYVNSLSIDSMVKHNNWGIAILPLAPLNFASESSPEIPITLTIAPMCCEFNGLRNITLPRLQGLPVMNTPGSNQYLTADNFQSPCALPEFDVTPPIDIPGEVKNMMELAEIDTMIPFDLSAKKKNTMEMYRVRLSDKPHTDDPILCLSLSPASDPRLSHTMLGEILNYYTHWAGSLKFTFLFCGSMMATGKLLVSYAPPGADPPKKRKEAMLGTHVIWDIGLQSSCTMVVPWISNTTYRQTIDDSFTEGGYISVFYQTRIVVPLSTPREMDILGFVSACNDFSVRLMRDTTHIEQKALAQGLGQMLESMIDNTVRETVGAATSRDALPNTEASGPAHSKEIPALTAVETGATNPLVPSDTVQTRHVVQHRSRSESSIESFFARGACVAIITVDNSASTKNKDKLFTVWKITYKDTVQLRRKLEFFTYSRFDMEFTFVVTANFTETNNGHALNQVYQIMYVPPGAPVPEKWDDYTWQTSSNPSIFYTYGTAPARISVPYVGISNAYSHFYDGFSKVPLKDQSAALGDSLYGAASLNDFGILAVRVVNDHNPTKVTSKIRVYLKPKHIRVWCPRPPRAVAYYGPGVDYKDGTLTPLSTKDLTTYGFGHQNKAVYTAGYKICNYHLATQEDLQNAVNVMWNRDLLVTESRAQGTDSIARCNCNAGVYYCESRRKYYPVSFVGPTFQYMEANNYYPARYQSHMLIGHGFASPGDCGGILRCHHGVIGIITAGGEGLVAFTDIRDLYAYEEEAMEQGITNYIESLGAAFGSGFTQQIGDKITELTNMVTSTITEKLLKNLIKIISSLVIITRNYEDTTTVLATLALLGCDASPWQWLRKKACDVLEIPYVTKQGDSWLKKFTEACNAAKGLEWVSNKISKFIDWLKEKIIPQARDKLEFVTKLRQLEMLENQISTIHQSCPSQEHQEILFNNVRWLSIQSKRFAPLYAVEAKRIQKLEHTINNYIQFKSKHRIEPVCLLVHGSPGTGKSVATNLIARAIAERENTSTYSLPPDPSHFDGYKQQGVVIMDDLNQNPDGADMKLFCQMVSTVEFIPPMASLEEKGILFTSNYVLASTNSSRISPPTVAHSDALARRFAFDMDIQVMNEYSRDGKLNMAMATEMCKNCHQPANFKRCCPLVCGKAIQLMDKSSRVRYSIDQITTMIINERNRRSNIGNCMEALFQGPLQYKDLKIDIKTSPPPECINDLLQAVDSQEVRDYCEKKGWIVNITSQVQTERNINRAMTILQAVTTFAAVAGVVYVMYKLFAGHQGAYTGLPNKKPNVPTIRTAKVQGPGFDYAVAMAKRNIVTATTSKGEFTMLGVHDNVAILPTHASPGESIVIDGKEVEILDAKALEDQAGTNLEITIITLKRNEKFRDIRPHIPTQITETNDGVLIVNTSKYPNMYVPVGAVTEQGYLNLGGRQTARTLMYNFPTRAGQCGGVITCTGKVIGMHVGGNGSHGFAAALKRSYFTQSQGEIQWMRPSKEVGYPIINAPSKTKLEPSAFHYVFEGVKEPAVLTKNDPRLKTNFEEAIFSKYVGNKITEVDEHMKEAVDHYAGQLMSLDINTEQMCLEDAMYGTDGLEALDLSTSAGYPYVAMGKKKRDILNKQTRDTKEMQKLLDTYGINLPLVTYVKDELRSKTKVEQGKSRLIEASSLNDSVAMRMAFGNLYAAFHKNPGVITGSAVGCDPDLFWSKIPVLMEEKLFAFDYTGYDASLSPAWFEALEMVLEKIGFGDRVDYIDYLNHSHHLYKNKTYCVKGGMPSGCSGTSIFNSMINNLIIRTLLLKTYKGIDLDHLKMIAYGDDVIASYPHEVDASLLAQSGKDYGLTMTPADKSAIFETVTWENVTFLKRFFRADEKYPFLIHPVMPMKEIHESIRWTKDPRNTQDHVRSLCLLAWHNGEEEYNKFLAKIRSVPIGRALLLPEYSTLYRRWLDSF.

The N-myristoyl glycine; by host moiety is linked to residue G2. At 2–1520 (GAQVSSQKVG…NINRAMTILQ (1519 aa)) the chain is on the cytoplasmic side. Residues 580-600 (GLGQMLESMIDNTVRETVGAA) form an amphipathic alpha-helix region. Residues H901 and D919 each act as for protease 2A activity in the active site. 2 residues coordinate Zn(2+): C936 and C938. Residue C990 is the For protease 2A activity of the active site. C996 and H998 together coordinate Zn(2+). A membrane-binding region spans residues 1128–1200 (GDSWLKKFTE…HQSCPSQEHQ (73 aa)). Residues 1128–1266 (GDSWLKKFTE…SPGTGKSVAT (139 aa)) form an oligomerization region. The segment at 1149–1153 (SNKIS) is RNA-binding. Residues 1232 to 1388 (EHTINNYIQF…NEYSRDGKLN (157 aa)) enclose the SF3 helicase domain. 1256 to 1263 (GSPGTGKS) is an ATP binding site. C1396, C1399, C1408, and C1413 together coordinate Zn(2+). The segment at 1396–1413 (CKNCHQPANFKRCCPLVC) adopts a C4-type zinc-finger fold. The segment at 1440–1447 (ERNRRSNI) is RNA-binding. Residues 1451–1456 (MEALFQ) form an oligomerization region. Residues 1521–1536 (AVTTFAAVAGVVYVMY) lie within the membrane without spanning it. Residues 1537-2209 (KLFAGHQGAY…TLYRRWLDSF (673 aa)) are Cytoplasmic-facing. At Y1546 the chain carries O-(5'-phospho-RNA)-tyrosine. The 179-residue stretch at 1566–1744 (GPGFDYAVAM…FAAALKRSYF (179 aa)) folds into the Peptidase C3 domain. Catalysis depends on for protease 3C activity residues H1605, E1636, and C1712. The RdRp catalytic domain occupies 1975 to 2090 (EKLFAFDYTG…SYPHEVDASL (116 aa)). Mg(2+) is bound by residues D1981 and D2076.

It belongs to the picornaviruses polyprotein family. In terms of assembly, interacts with capsid protein VP1 and capsid protein VP3 to form heterotrimeric protomers. As to quaternary structure, interacts with capsid protein VP0, and capsid protein VP3 to form heterotrimeric protomers. Interacts with human PVR. Five protomers subsequently associate to form pentamers which serve as building blocks for the capsid. Interacts with capsid protein VP2, capsid protein VP3 and capsid protein VP4 following cleavage of capsid protein VP0. Interacts with capsid protein VP1 and capsid protein VP3 in the mature capsid. In terms of assembly, interacts with capsid protein VP0 and capsid protein VP1 to form heterotrimeric protomers. Five protomers subsequently associate to form pentamers which serve as building blocks for the capsid. Interacts with capsid protein VP4 in the mature capsid. Interacts with protein 2C; this interaction may be important for virion morphogenesis. As to quaternary structure, interacts with capsid protein VP1 and capsid protein VP3. Homodimer. In terms of assembly, homohexamer; forms a hexameric ring structure with 6-fold symmetry characteristic of AAA+ ATPases. Interacts (via N-terminus) with host RTN3 (via reticulon domain); this interaction is important for viral replication. Interacts with capsid protein VP3; this interaction may be important for virion morphogenesis. As to quaternary structure, interacts with protein 3CD. Homodimer. Interacts with host GBF1. Interacts (via GOLD domain) with host ACBD3 (via GOLD domain); this interaction allows the formation of a viral protein 3A/ACBD3 heterotetramer with a 2:2 stoichiometry, which will stimulate the recruitment of host PI4KB in order to synthesize PI4P at the viral RNA replication sites. In terms of assembly, interacts with RNA-directed RNA polymerase. As to quaternary structure, interacts with protein 3AB and with RNA-directed RNA polymerase. Interacts with Viral protein genome-linked and with protein 3CD. Mg(2+) serves as cofactor. Post-translationally, specific enzymatic cleavages in vivo by the viral proteases yield processing intermediates and the mature proteins. Myristoylation is required for the formation of pentamers during virus assembly. Further assembly of 12 pentamers and a molecule of genomic RNA generates the provirion. In terms of processing, during virion maturation, immature virions are rendered infectious following cleavage of VP0 into VP4 and VP2. This maturation seems to be an autocatalytic event triggered by the presence of RNA in the capsid and it is followed by a conformational change infectious virion. Post-translationally, myristoylation is required during RNA encapsidation and formation of the mature virus particle. VPg is uridylylated by the polymerase into VPg-pUpU. This acts as a nucleotide-peptide primer for the genomic RNA replication.

The protein resides in the virion. It localises to the host cytoplasm. Its subcellular location is the host cytoplasmic vesicle membrane. It is found in the host nucleus. The enzyme catalyses a ribonucleoside 5'-triphosphate + H2O = a ribonucleoside 5'-diphosphate + phosphate + H(+). It catalyses the reaction Selective cleavage of Tyr-|-Gly bond in the picornavirus polyprotein.. It carries out the reaction RNA(n) + a ribonucleoside 5'-triphosphate = RNA(n+1) + diphosphate. The catalysed reaction is Selective cleavage of Gln-|-Gly bond in the poliovirus polyprotein. In other picornavirus reactions Glu may be substituted for Gln, and Ser or Thr for Gly.. With respect to regulation, replication or transcription is subject to high level of random mutations by the nucleotide analog ribavirin. Its function is as follows. Forms an icosahedral capsid of pseudo T=3 symmetry with capsid proteins VP2 and VP3. The capsid is 300 Angstroms in diameter, composed of 60 copies of each capsid protein and enclosing the viral positive strand RNA genome. Capsid protein VP1 mainly forms the vertices of the capsid. Capsid protein VP1 interacts with host cell receptor PVR to provide virion attachment to target host cells. This attachment induces virion internalization predominantly through clathrin- and caveolin-independent endocytosis in Hela cells and through caveolin-mediated endocytosis in brain microvascular endothelial cells. Tyrosine kinases are probably involved in the entry process. Virus binding to PVR induces increased junctional permeability and rearrangement of junctional proteins. Modulation of endothelial tight junctions, as well as cytolytic infection of endothelial cells themselves, may result in loss of endothelial integrity which may help the virus to reach the CNS. After binding to its receptor, the capsid undergoes conformational changes. Capsid protein VP1 N-terminus (that contains an amphipathic alpha-helix) and capsid protein VP4 are externalized. Together, they shape a pore in the host membrane through which viral genome is translocated to host cell cytoplasm. Forms an icosahedral capsid of pseudo T=3 symmetry with capsid proteins VP2 and VP3. The capsid is 300 Angstroms in diameter, composed of 60 copies of each capsid protein and enclosing the viral positive strand RNA genome. In terms of biological role, lies on the inner surface of the capsid shell. After binding to the host receptor, the capsid undergoes conformational changes. Capsid protein VP4 is released, Capsid protein VP1 N-terminus is externalized, and together, they shape a pore in the host membrane through which the viral genome is translocated into the host cell cytoplasm. Functionally, component of immature procapsids, which is cleaved into capsid proteins VP4 and VP2 after maturation. Allows the capsid to remain inactive before the maturation step. Its function is as follows. Cysteine protease that cleaves viral polyprotein and specific host proteins. It is responsible for the autocatalytic cleavage between the P1 and P2 regions, which is the first cleavage occurring in the polyprotein. Also cleaves the host translation initiation factor EIF4G1, in order to shut down the capped cellular mRNA translation. Inhibits the host nucleus-cytoplasm protein and RNA trafficking by cleaving host members of the nuclear pores including NUP98, NUP62 and NUP153. Counteracts stress granule formation probably by antagonizing its assembly or promoting its dissassembly. Cleaves and inhibits host IFIH1/MDA5, thereby inhibiting the type-I IFN production and the establishment of the antiviral state. Cleaves and inhibits host MAVS, thereby inhibiting the type-I IFN production and the establishment of the antiviral state. Plays an essential role in the virus replication cycle by acting as a viroporin. Creates a pore in the host endoplasmic reticulum and as a consequence releases Ca2+ in the cytoplasm of infected cell. In turn, high levels of cytoplasmic calcium may trigger membrane trafficking and transport of viral ER-associated proteins to viroplasms, sites of viral genome replication. In terms of biological role, induces and associates with structural rearrangements of intracellular membranes. Displays RNA-binding, nucleotide binding and NTPase activities. May play a role in virion morphogenesis and viral RNA encapsidation by interacting with the capsid protein VP3. Functionally, localizes the viral replication complex to the surface of membranous vesicles. Together with protein 3CD binds the Cis-Active RNA Element (CRE) which is involved in RNA synthesis initiation. Acts as a cofactor to stimulate the activity of 3D polymerase, maybe through a nucleid acid chaperone activity. Its function is as follows. Localizes the viral replication complex to the surface of membranous vesicles. It inhibits host cell endoplasmic reticulum-to-Golgi apparatus transport and causes the disassembly of the Golgi complex, possibly through GBF1 interaction. This would result in depletion of MHC, trail receptors and IFN receptors at the host cell surface. Plays an essential role in viral RNA replication by recruiting ACBD3 and PI4KB at the viral replication sites, thereby allowing the formation of the rearranged membranous structures where viral replication takes place. Acts as a primer for viral RNA replication and remains covalently bound to viral genomic RNA. VPg is uridylylated prior to priming replication into VPg-pUpU. The oriI viral genomic sequence may act as a template for this. The VPg-pUpU is then used as primer on the genomic RNA poly(A) by the RNA-dependent RNA polymerase to replicate the viral genome. During genome replication, the VPg-RNA linkage is removed by the host TDP2, thereby accelerating replication. During the late stage of the replication cycle, host TDP2 is excluded from sites of viral RNA synthesis and encapsidation, allowing for the generation of progeny virions. In terms of biological role, involved in the viral replication complex and viral polypeptide maturation. It exhibits protease activity with a specificity and catalytic efficiency that is different from protease 3C. Protein 3CD lacks polymerase activity. Protein 3CD binds to the 5'UTR of the viral genome. Functionally, major viral protease that mediates proteolytic processing of the polyprotein. Cleaves host EIF5B, contributing to host translation shutoff. Also cleaves host PABPC1, contributing to host translation shutoff. Cleaves host RIGI and thus contributes to the inhibition of type I interferon production. Cleaves host NLRP1, triggers host N-glycine-mediated degradation of the autoinhibitory NLRP1 N-terminal fragment. Inhibits the integrated stress response (ISR) in the infected cell by cleaving host G3BP1. Stress granule formation is thus inhibited, which allows protein synthesis and viral replication. Its function is as follows. Replicates the viral genomic RNA on the surface of intracellular membranes. May form linear arrays of subunits that propagate along a strong head-to-tail interaction called interface-I. Covalently attaches UMP to a tyrosine of VPg, which is used to prime RNA synthesis. The positive stranded RNA genome is first replicated at virus induced membranous vesicles, creating a dsRNA genomic replication form. This dsRNA is then used as template to synthesize positive stranded RNA genomes. ss(+)RNA genomes are either translated, replicated or encapsidated. This chain is Genome polyprotein, found in Homo sapiens (Human).